Reading from the N-terminus, the 125-residue chain is Small ribosomal subunit protein uS13 (125 aa).

Residues 101-125 (QRTKTNARTRKGKRKTVANKKIAAK) are disordered.

Belongs to the universal ribosomal protein uS13 family. In terms of assembly, part of the 30S ribosomal subunit. Forms a loose heterodimer with protein S19. Forms two bridges to the 50S subunit in the 70S ribosome.

Located at the top of the head of the 30S subunit, it contacts several helices of the 16S rRNA. In the 70S ribosome it contacts the 23S rRNA (bridge B1a) and protein L5 of the 50S subunit (bridge B1b), connecting the 2 subunits; these bridges are implicated in subunit movement. Contacts the tRNAs in the A and P-sites. The polypeptide is Small ribosomal subunit protein uS13 (Borrelia duttonii (strain Ly)).